The following is a 718-amino-acid chain: Auxin response factor 2 (718 aa).

Residues 1 to 24 form a disordered region; sequence MVGIDLNTVEEEEDEEEGGATGTV. Positions 8–18 are enriched in acidic residues; sequence TVEEEEDEEEG. The TF-B3 DNA-binding region spans 147 to 249; the sequence is FCKTLTASDT…ELRLGVRRAA (103 aa).

Belongs to the ARF family. In terms of assembly, homo and heterodimers. In terms of tissue distribution, expressed in roots, culms, leaves and young panicles.

The protein resides in the nucleus. Functionally, auxin response factors (ARFs) are transcriptional factors that bind specifically to the DNA sequence 5'-TGTCTC-3' found in the auxin-responsive promoter elements (AuxREs). This is Auxin response factor 2 (ARF2) from Oryza sativa subsp. japonica (Rice).